We begin with the raw amino-acid sequence, 233 residues long: Uridylate kinase (233 aa).

Residues 8 to 11 (KLSG), Gly-51, and Arg-55 each bind ATP. Residues Asp-68 and 129–136 (TSNPFFTT) each bind UMP. The ATP site is built by Thr-156, Tyr-162, and Asp-165.

This sequence belongs to the UMP kinase family. In terms of assembly, homohexamer.

The protein localises to the cytoplasm. The enzyme catalyses UMP + ATP = UDP + ADP. Its pathway is pyrimidine metabolism; CTP biosynthesis via de novo pathway; UDP from UMP (UMPK route): step 1/1. Its activity is regulated as follows. Inhibited by UTP. Its function is as follows. Catalyzes the reversible phosphorylation of UMP to UDP. This is Uridylate kinase from Thermosipho melanesiensis (strain DSM 12029 / CIP 104789 / BI429).